The primary structure comprises 122 residues: Small ribosomal subunit protein uS13 (122 aa).

Positions 93-122 (RRSLPVRGQRTHTNARTRKGPAKPIAGKKK) are disordered.

It belongs to the universal ribosomal protein uS13 family. Part of the 30S ribosomal subunit. Forms a loose heterodimer with protein S19. Forms two bridges to the 50S subunit in the 70S ribosome.

Its function is as follows. Located at the top of the head of the 30S subunit, it contacts several helices of the 16S rRNA. In the 70S ribosome it contacts the 23S rRNA (bridge B1a) and protein L5 of the 50S subunit (bridge B1b), connecting the 2 subunits; these bridges are implicated in subunit movement. Contacts the tRNAs in the A and P-sites. The protein is Small ribosomal subunit protein uS13 of Chelativorans sp. (strain BNC1).